The sequence spans 814 residues: Valine--tRNA ligase (814 aa).

Residues 46-56 (PTVSGQLHIGH) carry the 'HIGH' region motif. A 'KMSKS' region motif is present at residues 536–540 (KMSKS). Residue lysine 539 participates in ATP binding.

Belongs to the class-I aminoacyl-tRNA synthetase family. ValS type 2 subfamily. Monomer.

Its subcellular location is the cytoplasm. It catalyses the reaction tRNA(Val) + L-valine + ATP = L-valyl-tRNA(Val) + AMP + diphosphate. Catalyzes the attachment of valine to tRNA(Val). As ValRS can inadvertently accommodate and process structurally similar amino acids such as threonine, to avoid such errors, it has a 'posttransfer' editing activity that hydrolyzes mischarged Thr-tRNA(Val) in a tRNA-dependent manner. This is Valine--tRNA ligase from Rickettsia typhi (strain ATCC VR-144 / Wilmington).